We begin with the raw amino-acid sequence, 810 residues long: Phospholipase D alpha 1 (810 aa).

The propeptide occupies 1–36 (MAQHLLHGTLHATIYEVDDLHTGGLRSGFFGKILAN). Residues 1 to 126 (MAQHLLHGTL…IHGEEVDQWV (126 aa)) enclose the C2 domain. Asp-187 is a Ca(2+) binding site. Positions 327–366 (AMFTHHQKIVVVDSEMPSRGGSQMRRIVSFVGGIDLCDGR) constitute a PLD phosphodiesterase 1 domain. Active-site residues include His-332, Lys-334, and Asp-339. Residue His-332 coordinates a 1,2-diacyl-sn-glycero-3-phosphate. 2 residues coordinate Ca(2+): His-372 and His-406. Residues Gln-522 and His-661 each contribute to the a 1,2-diacyl-sn-glycero-3-phosphate site. A PLD phosphodiesterase 2 domain is found at 656-683 (FMIYVHTKMMIVDDEYIIIGSANINQRS). Residues His-661, Lys-663, and Asp-668 contribute to the active site. Glu-722 is a binding site for Ca(2+).

The protein belongs to the phospholipase D family. C2-PLD subfamily. Requires Ca(2+) as cofactor.

The protein resides in the cytoplasm. It localises to the membrane. The catalysed reaction is a 1,2-diacyl-sn-glycero-3-phosphocholine + H2O = a 1,2-diacyl-sn-glycero-3-phosphate + choline + H(+). Its function is as follows. Hydrolyzes glycerol-phospholipids at the terminal phosphodiesteric bond. Plays an important role in various cellular processes, including phytohormone action, vesicular trafficking, secretion, cytoskeletal arrangement, meiosis, tumor promotion, pathogenesis, membrane deterioration and senescence. This Brassica oleracea var. capitata (Cabbage) protein is Phospholipase D alpha 1 (PLD1).